The following is a 351-amino-acid chain: MNVAIVGATGYGGIQAVNLLKKNKNYKISFLGGNKTSGLKWNDNFPFIYLDNDPYIEEISVDNISKNADVALLCLPNGLSSTLTRKLLDKGLKVIDLSADYRYKSLDEWKKVYSKEAAIYKRNDDDLCKEAVYGLPEINKEAISKGRLIACPGCYPTSALIPLAPYLSQGIIENEGIVIDSKSGTSGGGREPNQKLLLSECGEGLSAYGLINHRHTSEIEQVASLISGTKIELLFTPHLVPISRGMHSTIYGRLRDPGLTSDDCRILLDNYYRNFKNIKVLPVDTFPSTKWVKNTNQILLSVKVDNRNGRIIILSVIDNLLKGQTGQAIQNLNIMSGFSMDEGLDLTNNFP.

Residue Cys154 is part of the active site.

Belongs to the NAGSA dehydrogenase family. Type 1 subfamily.

Its subcellular location is the cytoplasm. The catalysed reaction is N-acetyl-L-glutamate 5-semialdehyde + phosphate + NADP(+) = N-acetyl-L-glutamyl 5-phosphate + NADPH + H(+). It functions in the pathway amino-acid biosynthesis; L-arginine biosynthesis; N(2)-acetyl-L-ornithine from L-glutamate: step 3/4. In terms of biological role, catalyzes the NADPH-dependent reduction of N-acetyl-5-glutamyl phosphate to yield N-acetyl-L-glutamate 5-semialdehyde. The chain is N-acetyl-gamma-glutamyl-phosphate reductase from Prochlorococcus marinus (strain MIT 9301).